We begin with the raw amino-acid sequence, 162 residues long: Cyclic pyranopterin monophosphate synthase (162 aa).

Residues Leu79 to His81 and Met117 to Glu118 contribute to the substrate site. The active site involves Asp132.

It belongs to the MoaC family. As to quaternary structure, homohexamer; trimer of dimers.

The enzyme catalyses (8S)-3',8-cyclo-7,8-dihydroguanosine 5'-triphosphate = cyclic pyranopterin phosphate + diphosphate. The protein operates within cofactor biosynthesis; molybdopterin biosynthesis. Its function is as follows. Catalyzes the conversion of (8S)-3',8-cyclo-7,8-dihydroguanosine 5'-triphosphate to cyclic pyranopterin monophosphate (cPMP). The chain is Cyclic pyranopterin monophosphate synthase from Bordetella petrii (strain ATCC BAA-461 / DSM 12804 / CCUG 43448).